The primary structure comprises 342 residues: Phosphate acyltransferase (342 aa).

Belongs to the PlsX family. As to quaternary structure, homodimer. Probably interacts with PlsY.

It localises to the cytoplasm. The enzyme catalyses a fatty acyl-[ACP] + phosphate = an acyl phosphate + holo-[ACP]. The protein operates within lipid metabolism; phospholipid metabolism. Its function is as follows. Catalyzes the reversible formation of acyl-phosphate (acyl-PO(4)) from acyl-[acyl-carrier-protein] (acyl-ACP). This enzyme utilizes acyl-ACP as fatty acyl donor, but not acyl-CoA. The protein is Phosphate acyltransferase of Shewanella woodyi (strain ATCC 51908 / MS32).